Here is a 492-residue protein sequence, read N- to C-terminus: Protein nucleotidyltransferase YdiU (492 aa).

ATP contacts are provided by G90, G92, R93, K113, D125, G126, R176, and R183. D252 serves as the catalytic Proton acceptor. Mg(2+) contacts are provided by N253 and D262. D262 is an ATP binding site.

Belongs to the SELO family. The cofactor is Mg(2+). Mn(2+) serves as cofactor.

It carries out the reaction L-seryl-[protein] + ATP = 3-O-(5'-adenylyl)-L-seryl-[protein] + diphosphate. The enzyme catalyses L-threonyl-[protein] + ATP = 3-O-(5'-adenylyl)-L-threonyl-[protein] + diphosphate. The catalysed reaction is L-tyrosyl-[protein] + ATP = O-(5'-adenylyl)-L-tyrosyl-[protein] + diphosphate. It catalyses the reaction L-histidyl-[protein] + UTP = N(tele)-(5'-uridylyl)-L-histidyl-[protein] + diphosphate. It carries out the reaction L-seryl-[protein] + UTP = O-(5'-uridylyl)-L-seryl-[protein] + diphosphate. The enzyme catalyses L-tyrosyl-[protein] + UTP = O-(5'-uridylyl)-L-tyrosyl-[protein] + diphosphate. Functionally, nucleotidyltransferase involved in the post-translational modification of proteins. It can catalyze the addition of adenosine monophosphate (AMP) or uridine monophosphate (UMP) to a protein, resulting in modifications known as AMPylation and UMPylation. The chain is Protein nucleotidyltransferase YdiU from Thioalkalivibrio sulfidiphilus (strain HL-EbGR7).